A 227-amino-acid chain; its full sequence is MRIWAVLASFLVFFYIPQSYAGVALGATRVIYPEGQKQVQLAVTNNDDKSSYLIQSWIENAEGKKDARFVITPPLFSMQGKKENTLRIIDATNGQMPEDRESLFWVNVKAIPAMDKAKTGENYLQFAIVSRIKLLYRPQGLVIPPEQAPGKLEFTRENGGLTLFNPTPYYLTVTDLKAGNKSLENTMVPPQGKVTVNIPGGYTGGDITYKTINDYGALTEQVKGVVK.

The signal sequence occupies residues 1-21 (MRIWAVLASFLVFFYIPQSYA).

This sequence belongs to the periplasmic pilus chaperone family.

The protein resides in the periplasm. Its function is as follows. Involved in the biogenesis of the F1C fimbriae. This Escherichia coli O6:H1 (strain CFT073 / ATCC 700928 / UPEC) protein is Chaperone protein FocC (focC).